A 140-amino-acid polypeptide reads, in one-letter code: Putative pre-16S rRNA nuclease (140 aa).

The protein belongs to the YqgF nuclease family.

The protein resides in the cytoplasm. Could be a nuclease involved in processing of the 5'-end of pre-16S rRNA. In Aeromonas hydrophila, this protein is Putative pre-16S rRNA nuclease.